A 206-amino-acid chain; its full sequence is Small ribosomal subunit protein uS4 (206 aa).

One can recognise an S4 RNA-binding domain in the interval 96 to 159; the sequence is SRLDNVVYRM…KKQARIVEGL (64 aa).

The protein belongs to the universal ribosomal protein uS4 family. In terms of assembly, part of the 30S ribosomal subunit. Contacts protein S5. The interaction surface between S4 and S5 is involved in control of translational fidelity.

In terms of biological role, one of the primary rRNA binding proteins, it binds directly to 16S rRNA where it nucleates assembly of the body of the 30S subunit. Its function is as follows. With S5 and S12 plays an important role in translational accuracy. In Chromobacterium violaceum (strain ATCC 12472 / DSM 30191 / JCM 1249 / CCUG 213 / NBRC 12614 / NCIMB 9131 / NCTC 9757 / MK), this protein is Small ribosomal subunit protein uS4.